The following is a 149-amino-acid chain: Arginine repressor (149 aa).

The protein belongs to the ArgR family.

The protein resides in the cytoplasm. It participates in amino-acid biosynthesis; L-arginine biosynthesis [regulation]. Regulates arginine biosynthesis genes. The sequence is that of Arginine repressor from Geobacillus sp. (strain WCH70).